The chain runs to 310 residues: Putative integrase/recombinase y4rE (310 aa).

One can recognise a Core-binding (CB) domain in the interval 6–83; sequence RFLGEKVERY…VLRRFYEYLA (78 aa). The region spanning 104-301 is the Tyr recombinase domain; it reads PPPRILSEAE…SVDLLAMAAE (198 aa). Active-site residues include R148, K173, H245, R248, and H279. The active-site O-(3'-phospho-DNA)-tyrosine intermediate is Y288.

This sequence belongs to the 'phage' integrase family.

This chain is Putative integrase/recombinase y4rE, found in Sinorhizobium fredii (strain NBRC 101917 / NGR234).